The primary structure comprises 719 residues: Polyribonucleotide nucleotidyltransferase (719 aa).

2 residues coordinate Mg(2+): aspartate 491 and aspartate 497. The KH domain occupies 558-617; sequence PRMLTIKINPEKIRDVIGKGGATIRALTEETGTQIDISDDGTIVIASVDEAQAKEAQRRI. Residues 627 to 695 enclose the S1 motif domain; that stretch reads GQVYDGSVLR…DKGRLRLSVK (69 aa).

It belongs to the polyribonucleotide nucleotidyltransferase family. Requires Mg(2+) as cofactor.

Its subcellular location is the cytoplasm. The catalysed reaction is RNA(n+1) + phosphate = RNA(n) + a ribonucleoside 5'-diphosphate. Functionally, involved in mRNA degradation. Catalyzes the phosphorolysis of single-stranded polyribonucleotides processively in the 3'- to 5'-direction. This is Polyribonucleotide nucleotidyltransferase from Bordetella petrii (strain ATCC BAA-461 / DSM 12804 / CCUG 43448).